Here is a 240-residue protein sequence, read N- to C-terminus: Ribosome maturation protein SDO1 homolog (240 aa).

The protein belongs to the SDO1/SBDS family.

The sequence is that of Ribosome maturation protein SDO1 homolog from Methanocaldococcus jannaschii (strain ATCC 43067 / DSM 2661 / JAL-1 / JCM 10045 / NBRC 100440) (Methanococcus jannaschii).